A 243-amino-acid chain; its full sequence is Hydroxyacylglutathione hydrolase (243 aa).

Zn(2+) contacts are provided by histidine 59, histidine 61, aspartate 63, histidine 64, histidine 117, aspartate 135, and histidine 173.

This sequence belongs to the metallo-beta-lactamase superfamily. Glyoxalase II family. In terms of assembly, monomer. Zn(2+) serves as cofactor.

It carries out the reaction an S-(2-hydroxyacyl)glutathione + H2O = a 2-hydroxy carboxylate + glutathione + H(+). It participates in secondary metabolite metabolism; methylglyoxal degradation; (R)-lactate from methylglyoxal: step 2/2. Functionally, thiolesterase that catalyzes the hydrolysis of S-D-lactoyl-glutathione to form glutathione and D-lactic acid. This chain is Hydroxyacylglutathione hydrolase, found in Acidiphilium cryptum (strain JF-5).